The primary structure comprises 265 residues: Palmitoyltransferase ZDHHC21 (265 aa).

Topologically, residues 1–16 are cytoplasmic; that stretch reads MGLRIHFVVDPHGWCC. Residues 17 to 37 form a helical membrane-spanning segment; sequence MGLIVFVWLYNFFLIPKIVLF. Over 38–44 the chain is Extracellular; sequence PHYEEGH. Residues 45–65 traverse the membrane as a helical segment; sequence IPGILIIIFYGIAMFCLVALV. Topologically, residues 66–133 are cytoplasmic; it reads RASITDPGRL…NNCVGEDNHW (68 aa). Positions 90 to 140 constitute a DHHC domain; sequence ELCNKCNLMRPKRSHHCSRCGHCVRRMDHHCPWINNCVGEDNHWLFLQLCF. The active-site S-palmitoyl cysteine intermediate is Cys120. Residues 134–154 form a helical membrane-spanning segment; it reads LFLQLCFYTELLTCYALMFSF. At 155–185 the chain is on the extracellular side; it reads CHYYYFLPLKKRNLDLFVVRHELAIMRLAAF. A helical transmembrane segment spans residues 186 to 206; it reads MGITMLVGITGLFYTQLIGII. Topologically, residues 207–265 are cytoplasmic; it reads TDTTSIEKMSNCCEEISRPRKPWQQTFSEVFGTRWKILWFIPFRRRQPLRVPYHFANHV.

Belongs to the DHHC palmitoyltransferase family.

It is found in the golgi apparatus membrane. The protein localises to the golgi apparatus. The protein resides in the cis-Golgi network membrane. It localises to the cell membrane. It carries out the reaction L-cysteinyl-[protein] + hexadecanoyl-CoA = S-hexadecanoyl-L-cysteinyl-[protein] + CoA. In terms of biological role, palmitoyltransferase that catalyzes the addition of palmitate onto various protein substrates. Palmitoylates sex steroid hormone receptors, including ESR1, PGR and AR, thereby regulating their targeting to the plasma membrane. This affects rapid intracellular signaling by sex hormones via ERK and AKT kinases and the generation of cAMP, but does not affect that mediated by their nuclear receptor. Palmitoylates FYN, regulates its localization in hair follicles and plays a key role in epidermal homeostasis and hair follicle differentiation. Through the palmitoylation of PLCB1 and the regulation of PLCB1 downstream signaling may indirectly regulate the function of the endothelial barrier and the adhesion of leukocytes to the endothelium. Also has a palmitoyltransferase activity toward ADRA1D, positively regulating its activity and expression and may thereby play a role in vascular contraction. May also palmitoylate eNOS and LCK. This chain is Palmitoyltransferase ZDHHC21, found in Bos taurus (Bovine).